The sequence spans 613 residues: Protein ECM3 (613 aa).

4 consecutive transmembrane segments (helical) span residues 10 to 30 (IWASVRPIIKIYLIIGVGFGL), 74 to 94 (GIICLTSVILFATGLGFAFIV), 106 to 126 (GGILAGGMFPNISDLPIAYLQ), and 143 to 163 (VANVIIFLAMFLICVFNLGGF). The disordered stretch occupies residues 177–256 (DEENTLTNDD…PAIDDRSSNS (80 aa)). 2 stretches are compositionally biased toward polar residues: residues 187–206 (SAQQPTQPIEGNSSSSSNQD) and 213–226 (ESTVPNSSQASYIS). A phosphoserine mark is found at Ser291 and Ser338. The interval 345-366 (RRRKSSISSQGAPSVLQADGTI) is disordered. Transmembrane regions (helical) follow at residues 432-452 (MAVILALIIAFIPWVKALFVT), 471-491 (FIMDFTSYVGAASVPFGLILL), 546-566 (MLLFVTAITWNLPTMTTLIYF), and 587-607 (FLMLQYPLMVVSLPFLVSYFI).

The protein localises to the endoplasmic reticulum membrane. May be involved in cell wall organization and biogenesis. This is Protein ECM3 (ECM3) from Saccharomyces cerevisiae (strain ATCC 204508 / S288c) (Baker's yeast).